The primary structure comprises 415 residues: Gamma-glutamyl phosphate reductase (415 aa).

The protein belongs to the gamma-glutamyl phosphate reductase family.

Its subcellular location is the cytoplasm. The enzyme catalyses L-glutamate 5-semialdehyde + phosphate + NADP(+) = L-glutamyl 5-phosphate + NADPH + H(+). Its pathway is amino-acid biosynthesis; L-proline biosynthesis; L-glutamate 5-semialdehyde from L-glutamate: step 2/2. In terms of biological role, catalyzes the NADPH-dependent reduction of L-glutamate 5-phosphate into L-glutamate 5-semialdehyde and phosphate. The product spontaneously undergoes cyclization to form 1-pyrroline-5-carboxylate. The protein is Gamma-glutamyl phosphate reductase of Dictyoglomus turgidum (strain DSM 6724 / Z-1310).